The sequence spans 285 residues: Cell division protein ZipA (285 aa).

Methionine 1 is a topological domain (periplasmic). Residues 2–22 (EIGLREWLIVIGIVVIGGILF) traverse the membrane as a helical segment. Over 23–285 (DGWRRMRGSK…FERRQLTHKR (263 aa)) the chain is Cytoplasmic. The interval 49–88 (AVSENSELLGPSRSVDFPQGAGFEPDEENLPSLSVRGPSR) is disordered.

Belongs to the ZipA family. As to quaternary structure, interacts with FtsZ via their C-terminal domains.

The protein resides in the cell inner membrane. Essential cell division protein that stabilizes the FtsZ protofilaments by cross-linking them and that serves as a cytoplasmic membrane anchor for the Z ring. Also required for the recruitment to the septal ring of downstream cell division proteins. The chain is Cell division protein ZipA from Azotobacter vinelandii (strain DJ / ATCC BAA-1303).